The following is a 384-amino-acid chain: Odorant receptor 33c (384 aa).

Residues M1–Y35 are Cytoplasmic-facing. A helical membrane pass occupies residues V36–L56. Residues L57–E63 lie on the Extracellular side of the membrane. The helical transmembrane segment at F64 to H84 threads the bilayer. Residues L85 to C128 lie on the Cytoplasmic side of the membrane. The chain crosses the membrane as a helical span at residues L129–I149. At S150–R169 the chain is on the extracellular side. Residues F170–G190 traverse the membrane as a helical segment. Over L191–R251 the chain is Cytoplasmic. The helical transmembrane segment at T252–V272 threads the bilayer. At S273–Y274 the chain is on the extracellular side. Residues M275–V295 traverse the membrane as a helical segment. Over C296–E358 the chain is Cytoplasmic. A helical transmembrane segment spans residues L359 to V379. Topologically, residues R380–I384 are extracellular.

The protein belongs to the insect chemoreceptor superfamily. Heteromeric odorant receptor channel (TC 1.A.69) family. Or2a subfamily. As to quaternary structure, interacts with Orco. Complexes exist early in the endomembrane system in olfactory sensory neurons (OSNs), coupling these complexes to the conserved ciliary trafficking pathway. Expressed in the antenna and in a subset of 18 olfactory receptor neurons in the maxillary palp.

The protein resides in the cell membrane. In terms of biological role, odorant receptor which mediates acceptance or avoidance behavior, depending on its substrates. The odorant receptor repertoire encodes a large collection of odor stimuli that vary widely in identity, intensity, and duration. May form a complex with Orco to form odorant-sensing units, providing sensitive and prolonged odorant signaling and calcium permeability. This chain is Odorant receptor 33c (Or33c), found in Drosophila melanogaster (Fruit fly).